The sequence spans 32 residues: MAKEIFTVAGVMWALVLTGLSVGFGLLKIQGE.

The chain crosses the membrane as a helical span at residues 5 to 25; sequence IFTVAGVMWALVLTGLSVGFG.

The protein belongs to the PetM family. As to quaternary structure, the 4 large subunits of the cytochrome b6-f complex are cytochrome b6, subunit IV (17 kDa polypeptide, PetD), cytochrome f and the Rieske protein, while the 4 small subunits are PetG, PetL, PetM and PetN. The complex functions as a dimer.

It is found in the plastid. It localises to the chloroplast thylakoid membrane. Component of the cytochrome b6-f complex, which mediates electron transfer between photosystem II (PSII) and photosystem I (PSI), cyclic electron flow around PSI, and state transitions. This is Cytochrome b6-f complex subunit 7 from Emiliania huxleyi (Coccolithophore).